The following is a 347-amino-acid chain: Phenylalanine--tRNA ligase alpha subunit (347 aa).

Mg(2+) is bound at residue Glu265.

The protein belongs to the class-II aminoacyl-tRNA synthetase family. Phe-tRNA synthetase alpha subunit type 1 subfamily. In terms of assembly, tetramer of two alpha and two beta subunits. It depends on Mg(2+) as a cofactor.

The protein resides in the cytoplasm. The catalysed reaction is tRNA(Phe) + L-phenylalanine + ATP = L-phenylalanyl-tRNA(Phe) + AMP + diphosphate + H(+). The polypeptide is Phenylalanine--tRNA ligase alpha subunit (Mycolicibacterium paratuberculosis (strain ATCC BAA-968 / K-10) (Mycobacterium paratuberculosis)).